A 635-amino-acid chain; its full sequence is Threonine--tRNA ligase (635 aa).

The region spanning 1-61 (MIQITLPDSS…SQDSALSIVT (61 aa)) is the TGS domain. Positions 242-533 (DHRKLGKELD…LIEEHAGALP (292 aa)) are catalytic. Zn(2+) is bound by residues Cys-333, His-384, and His-510.

Belongs to the class-II aminoacyl-tRNA synthetase family. In terms of assembly, homodimer. Zn(2+) is required as a cofactor.

It localises to the cytoplasm. The enzyme catalyses tRNA(Thr) + L-threonine + ATP = L-threonyl-tRNA(Thr) + AMP + diphosphate + H(+). Catalyzes the attachment of threonine to tRNA(Thr) in a two-step reaction: L-threonine is first activated by ATP to form Thr-AMP and then transferred to the acceptor end of tRNA(Thr). Also edits incorrectly charged L-seryl-tRNA(Thr). This Polaromonas naphthalenivorans (strain CJ2) protein is Threonine--tRNA ligase.